Reading from the N-terminus, the 709-residue chain is MLNFFAAAPKGFEYSLAQELTEFGATEIKESVAGVYFTAPLTLAYRITLWTRLASRIVLVIYKGSCESAEQLYNAAYCIDWPAHFSNRNTFSIDFHGTGGFINNTQFGALKIKDAIVDRFRDDGDERPNVSRTDADFKVDAHFRNGVITIAMNFSGPSLHQRGYRSTTGEAPLKENLAANMLVRSGWQAAPTTLLDPFCGSGTVLIEAALMAADIAPGLQRNRFGFEHWRRHDKAVWQDIVAEAKARASLGVKRCEIKFYGSDIDSRLVALAKRNAENAGVLELIEFKVANALNIEPPAAEGYLITNPPYGERLGNVSELLQLYYQLGDKFKKEFGGWKVAMLCSDIELISSLKLKADKQMKMFNGALECAFNLYTLHANSTRRDTPVLPEGVDIADIAPAFANRIKKNAKQLEKWAQKEGIDSYRIYDADIPEYNVAVDKYLDYVIVQEYMAPATIPEAVTKRRLSDVLLALPAAIGINPNKIIMKTRERQKGTSQYQKLDERKLELITTEYGAKFKLNLTGYLDTGLFLDHRLTRRLVGQKAKGRRVLNLFSYTGSASVHAALGGAKSVTTVDMSNTYIAWAKDNFALNGLQGKQYEFVQADCLQWIRDCNEQFDLIFIDPPTFSNSKRMEDSFDVQRDHVNLLSALVKLLSPTGELVFSNNKRKFKMDIETLTKMNITVKNIDDITLPMDYKRNPHIHNTWLITHA.

A THUMP domain is found at 43-154 (LAYRITLWTR…NGVITIAMNF (112 aa)).

The protein belongs to the methyltransferase superfamily. RlmKL family.

It is found in the cytoplasm. It carries out the reaction guanosine(2445) in 23S rRNA + S-adenosyl-L-methionine = N(2)-methylguanosine(2445) in 23S rRNA + S-adenosyl-L-homocysteine + H(+). The catalysed reaction is guanosine(2069) in 23S rRNA + S-adenosyl-L-methionine = N(2)-methylguanosine(2069) in 23S rRNA + S-adenosyl-L-homocysteine + H(+). Specifically methylates the guanine in position 2445 (m2G2445) and the guanine in position 2069 (m7G2069) of 23S rRNA. The chain is Ribosomal RNA large subunit methyltransferase K/L from Shewanella sp. (strain W3-18-1).